Here is a 204-residue protein sequence, read N- to C-terminus: Peptide deformylase (204 aa).

Cysteine 131 and histidine 174 together coordinate Fe cation. Residue glutamate 175 is part of the active site. A Fe cation-binding site is contributed by histidine 178.

The protein belongs to the polypeptide deformylase family. Fe(2+) is required as a cofactor.

The enzyme catalyses N-terminal N-formyl-L-methionyl-[peptide] + H2O = N-terminal L-methionyl-[peptide] + formate. In terms of biological role, removes the formyl group from the N-terminal Met of newly synthesized proteins. Requires at least a dipeptide for an efficient rate of reaction. N-terminal L-methionine is a prerequisite for activity but the enzyme has broad specificity at other positions. This chain is Peptide deformylase, found in Streptococcus equi subsp. zooepidemicus (strain MGCS10565).